We begin with the raw amino-acid sequence, 126 residues long: Holo-[acyl-carrier-protein] synthase (126 aa).

Positions 9 and 58 each coordinate Mg(2+).

Belongs to the P-Pant transferase superfamily. AcpS family. Requires Mg(2+) as cofactor.

Its subcellular location is the cytoplasm. The catalysed reaction is apo-[ACP] + CoA = holo-[ACP] + adenosine 3',5'-bisphosphate + H(+). Its function is as follows. Transfers the 4'-phosphopantetheine moiety from coenzyme A to a Ser of acyl-carrier-protein. The protein is Holo-[acyl-carrier-protein] synthase of Salmonella agona (strain SL483).